Reading from the N-terminus, the 608-residue chain is Glutamine--fructose-6-phosphate aminotransferase [isomerizing] (608 aa).

The Nucleophile; for GATase activity role is filled by C2. A Glutamine amidotransferase type-2 domain is found at 2-217; sequence CGIVGIVGHK…DGDWAVVGKT (216 aa). SIS domains lie at 283–422 and 456–598; these read TDID…ARGT and LSRE…VDQP. K603 (for Fru-6P isomerization activity) is an active-site residue.

The protein localises to the cytoplasm. It catalyses the reaction D-fructose 6-phosphate + L-glutamine = D-glucosamine 6-phosphate + L-glutamate. Involved in the production of the root hair deformation (HAD) factor specifically on medicago. The sequence is that of Glutamine--fructose-6-phosphate aminotransferase [isomerizing] (nodM) from Rhizobium leguminosarum bv. viciae.